The sequence spans 120 residues: Ig heavy chain V region AC38 15.3 (120 aa).

A v segment region spans residues 1–98 (QVQLLQPGTE…EDSAVYYCAR (98 aa)). Cysteine 22 and cysteine 96 are joined by a disulfide. Positions 99–105 (WDYEGDR) are d segment. The j segment stretch occupies residues 106–120 (YFDVWGTGTTVTVSS).

The protein is Ig heavy chain V region AC38 15.3 of Mus musculus (Mouse).